The primary structure comprises 374 residues: Putative glutamate--cysteine ligase 2-2 (374 aa).

It belongs to the glutamate--cysteine ligase type 2 family. YbdK subfamily.

The catalysed reaction is L-cysteine + L-glutamate + ATP = gamma-L-glutamyl-L-cysteine + ADP + phosphate + H(+). Its function is as follows. ATP-dependent carboxylate-amine ligase which exhibits weak glutamate--cysteine ligase activity. In Rhodococcus jostii (strain RHA1), this protein is Putative glutamate--cysteine ligase 2-2.